The following is a 177-amino-acid chain: Large ribosomal subunit protein uL6 (177 aa).

Belongs to the universal ribosomal protein uL6 family. As to quaternary structure, part of the 50S ribosomal subunit.

Its function is as follows. This protein binds to the 23S rRNA, and is important in its secondary structure. It is located near the subunit interface in the base of the L7/L12 stalk, and near the tRNA binding site of the peptidyltransferase center. This chain is Large ribosomal subunit protein uL6, found in Shewanella frigidimarina (strain NCIMB 400).